The primary structure comprises 63 residues: Large ribosomal subunit protein uL29 (63 aa).

Belongs to the universal ribosomal protein uL29 family.

The chain is Large ribosomal subunit protein uL29 from Salmonella agona (strain SL483).